Reading from the N-terminus, the 314-residue chain is Beta-lactamase 2 (314 aa).

The N-terminal stretch at 1-26 is a signal peptide; sequence MLHTRIRRATLGAVAALSLVPVMACG. Over residues 32–47 the composition is skewed to low complexity; sequence DAAEPAGSAPSSSAAA. Residues 32–51 are disordered; the sequence is DAAEPAGSAPSSSAAAHKPG. Residue S96 is the Acyl-ester intermediate of the active site. 258-260 serves as a coordination point for substrate; the sequence is KTG.

This sequence belongs to the class-A beta-lactamase family.

It catalyses the reaction a beta-lactam + H2O = a substituted beta-amino acid. The chain is Beta-lactamase 2 (blaU) from Streptomyces cacaoi.